Consider the following 638-residue polypeptide: LIM domain kinase 2 (638 aa).

2 LIM zinc-binding domains span residues 12 to 63 (CRGC…CHKD) and 72 to 124 (CHGC…CGKC). Residues 152–239 (LISMPATTEC…TLQLLIEHDP (88 aa)) enclose the PDZ domain. Phosphothreonine is present on threonine 210. Polar residues predominate over residues 257 to 266 (MQSSGHTLML). Residues 257–304 (MQSSGHTLMLSTLDAKENQEGTLRRRSLRRSNSISKSPGPSSPKEPLL) form a disordered region. The segment covering 270–279 (DAKENQEGTL) has biased composition (basic and acidic residues). Residues 286-304 (RSNSISKSPGPSSPKEPLL) are compositionally biased toward low complexity. A phosphoserine mark is found at serine 293 and serine 298. The Protein kinase domain occupies 331-608 (LIHGEVLGKG…DSFEALSLFL (278 aa)). ATP contacts are provided by residues 337-345 (LGKGFFGQA) and lysine 360. Residue aspartate 451 is part of the active site. Threonine 505 carries the phosphothreonine; by ROCK1 and CDC42BP modification.

This sequence belongs to the protein kinase superfamily. TKL Ser/Thr protein kinase family. As to quaternary structure, binds ROCK1 and MARF1. Interacts with NISCH. In terms of processing, phosphorylated on serine and/or threonine residues by ROCK1. Found in various tissues at moderate levels, except for testis, which shows very low expression.

The protein resides in the cytoplasm. The protein localises to the nucleus. It localises to the perinuclear region. Its subcellular location is the cytoskeleton. It is found in the spindle. The protein resides in the microtubule organizing center. The protein localises to the centrosome. It catalyses the reaction L-seryl-[protein] + ATP = O-phospho-L-seryl-[protein] + ADP + H(+). The catalysed reaction is L-threonyl-[protein] + ATP = O-phospho-L-threonyl-[protein] + ADP + H(+). Functionally, serine/threonine-protein kinase that plays an essential role in the regulation of actin filament dynamics. Acts downstream of several Rho family GTPase signal transduction pathways. Involved in astral microtubule organization and mitotic spindle orientation during early stages of mitosis by mediating phosphorylation of TPPP. Displays serine/threonine-specific phosphorylation of myelin basic protein and histone (MBP) in vitro. Suppresses ciliogenesis via multiple pathways; phosphorylation of CFL1, directional trafficking of ciliary vesicles to the ciliary base, and by facilitating YAP1 nuclear localization where it acts as a transcriptional corepressor of the TEAD4 target genes AURKA and PLK1. The sequence is that of LIM domain kinase 2 (Limk2) from Rattus norvegicus (Rat).